The chain runs to 493 residues: Farnesoate epoxidase (493 aa).

Residues 1 to 24 (MLALIVLCFILFFYIISRRHRGLC) form the signal peptide. Cys-433 is a binding site for heme.

This sequence belongs to the cytochrome P450 family. Heme is required as a cofactor. In terms of tissue distribution, constitutively expressed in corpora allata from the first instar larval to adult stages.

The catalysed reaction is (2E,6E)-farnesoate + reduced [NADPH--hemoprotein reductase] + O2 = juvenile hormone III carboxylate + oxidized [NADPH--hemoprotein reductase] + H2O + H(+). Functionally, catalyzes the conversion of farnesoate to juvenile hormone III acid in juvenile hormone biosynthesis. In Bombyx mori (Silk moth), this protein is Farnesoate epoxidase.